Reading from the N-terminus, the 249-residue chain is Proteasome subunit alpha type-3 (249 aa).

The protein belongs to the peptidase T1A family. As to quaternary structure, the 26S proteasome consists of a 20S proteasome core and two 19S regulatory subunits. The 20S proteasome core is composed of 28 subunits that are arranged in four stacked rings, resulting in a barrel-shaped structure. The two end rings are each formed by seven alpha subunits, and the two central rings are each formed by seven beta subunits. The catalytic chamber with the active sites is on the inside of the barrel.

The protein localises to the cytoplasm. It localises to the nucleus. Its function is as follows. The proteasome is a multicatalytic proteinase complex which is characterized by its ability to cleave peptides with Arg, Phe, Tyr, Leu, and Glu adjacent to the leaving group at neutral or slightly basic pH. The proteasome has an ATP-dependent proteolytic activity. The protein is Proteasome subunit alpha type-3 (PAG1) of Oryza sativa subsp. japonica (Rice).